Reading from the N-terminus, the 224-residue chain is Cell division protein SepF (224 aa).

The segment at 21–78 (DDYYEDDDRGPAPRGYRRPREDRFEDEGYAPRGYDGHPEDRRRDYDEPPAYRAGLAGG) is disordered. Residues 54 to 66 (YDGHPEDRRRDYD) show a composition bias toward basic and acidic residues.

This sequence belongs to the SepF family. Homodimer. Interacts with FtsZ.

The protein localises to the cytoplasm. In terms of biological role, cell division protein that is part of the divisome complex and is recruited early to the Z-ring. Probably stimulates Z-ring formation, perhaps through the cross-linking of FtsZ protofilaments. Its function overlaps with FtsA. This Mycolicibacterium gilvum (strain PYR-GCK) (Mycobacterium gilvum (strain PYR-GCK)) protein is Cell division protein SepF.